A 191-amino-acid polypeptide reads, in one-letter code: Peptidyl-tRNA hydrolase (191 aa).

Y14 lines the tRNA pocket. H19 serves as the catalytic Proton acceptor. Positions 64, 66, and 113 each coordinate tRNA.

The protein belongs to the PTH family. As to quaternary structure, monomer.

It localises to the cytoplasm. It catalyses the reaction an N-acyl-L-alpha-aminoacyl-tRNA + H2O = an N-acyl-L-amino acid + a tRNA + H(+). Its function is as follows. Hydrolyzes ribosome-free peptidyl-tRNAs (with 1 or more amino acids incorporated), which drop off the ribosome during protein synthesis, or as a result of ribosome stalling. Functionally, catalyzes the release of premature peptidyl moieties from peptidyl-tRNA molecules trapped in stalled 50S ribosomal subunits, and thus maintains levels of free tRNAs and 50S ribosomes. The sequence is that of Peptidyl-tRNA hydrolase from Fusobacterium nucleatum subsp. nucleatum (strain ATCC 25586 / DSM 15643 / BCRC 10681 / CIP 101130 / JCM 8532 / KCTC 2640 / LMG 13131 / VPI 4355).